Consider the following 88-residue polypeptide: Small ribosomal subunit protein uS17 (88 aa).

The protein belongs to the universal ribosomal protein uS17 family. In terms of assembly, part of the 30S ribosomal subunit.

Functionally, one of the primary rRNA binding proteins, it binds specifically to the 5'-end of 16S ribosomal RNA. The protein is Small ribosomal subunit protein uS17 of Saccharophagus degradans (strain 2-40 / ATCC 43961 / DSM 17024).